The following is a 354-amino-acid chain: Glutamine synthetase (354 aa).

The GS beta-grasp domain maps to 22–101 (IQAEYVWIDG…VLAETYNNDG (80 aa)). Residues 108–354 (HRHHAKKVFD…IIAETTILDK (247 aa)) form the GS catalytic domain.

It belongs to the glutamine synthetase family. In terms of assembly, homooctamer.

Its subcellular location is the cytoplasm. The catalysed reaction is L-glutamate + NH4(+) + ATP = L-glutamine + ADP + phosphate + H(+). The polypeptide is Glutamine synthetase (glnA) (Agaricus bisporus (White button mushroom)).